Consider the following 809-residue polypeptide: Glycerol-3-phosphate acyltransferase (809 aa).

Residues 309 to 314 carry the HXXXXD motif motif; the sequence is HRSHMD.

It belongs to the GPAT/DAPAT family.

Its subcellular location is the cell inner membrane. It catalyses the reaction sn-glycerol 3-phosphate + an acyl-CoA = a 1-acyl-sn-glycero-3-phosphate + CoA. It functions in the pathway phospholipid metabolism; CDP-diacylglycerol biosynthesis; CDP-diacylglycerol from sn-glycerol 3-phosphate: step 1/3. The sequence is that of Glycerol-3-phosphate acyltransferase from Shewanella oneidensis (strain ATCC 700550 / JCM 31522 / CIP 106686 / LMG 19005 / NCIMB 14063 / MR-1).